The primary structure comprises 416 residues: Floricaula/leafy homolog 2 (416 aa).

Residues 154 to 237 (EGLSEEPVQQ…DASGGISERQ (84 aa)) are disordered. Residues 210-225 (AEEDEETEEGQEDDWN) show a composition bias toward acidic residues. 3 consecutive DNA-binding regions follow at residues 238–242 (REHPF), 307–314 (NKPKMRHY), and 378–381 (YVPT).

It belongs to the FLO/LFY family. In terms of tissue distribution, expressed in floral meristems and in indeterminate vegetative meristems.

Its subcellular location is the nucleus. Probable transcription factor that act to specify determinacy in the progenitor cells for both flowers and leaves. The chain is Floricaula/leafy homolog 2 (FL2) from Nicotiana tabacum (Common tobacco).